The chain runs to 294 residues: MRTDGDSWDIVSSVGLTALGVATFRALETVRPDALIQDDYARWFVEAAGEPHFTGLLADPSLLGDMRFSGFMGSRTRFFDEFFSSATGAGVSQAVILAAGLDARAYRLDWPTGTTVFEVDQPQVLEFKAEVLADHGATAKADRRPVAVDLRDDWPAALEAAGFDPGKPTAWSVEGLLAYLPGAAHDALFERIDELSSPGSHVAVDNFAEGTDMQRFDAIRAKYFAENPFGDIDIAELFYGDERADPVQWLTGHGWSVRRSTSLELAAAYGRPVPDLPEELVDLSERSTYLTAVK.

S-adenosyl-L-methionine-binding positions include Asp-120 and 149-150 (DL).

This sequence belongs to the UPF0677 family.

Functionally, exhibits S-adenosyl-L-methionine-dependent methyltransferase activity. This chain is Putative S-adenosyl-L-methionine-dependent methyltransferase RHA1_ro00605, found in Rhodococcus jostii (strain RHA1).